The chain runs to 146 residues: Cyanate hydratase (146 aa).

Residues Arg-87, Glu-90, and Ser-113 contribute to the active site.

The protein belongs to the cyanase family.

The enzyme catalyses cyanate + hydrogencarbonate + 3 H(+) = NH4(+) + 2 CO2. Catalyzes the reaction of cyanate with bicarbonate to produce ammonia and carbon dioxide. This Nostoc sp. (strain PCC 7120 / SAG 25.82 / UTEX 2576) protein is Cyanate hydratase.